Reading from the N-terminus, the 298-residue chain is NAD-dependent L-serine dehydrogenase (298 aa).

NAD(+) is bound by residues lysine 2–aspartate 31, leucine 65–proline 66, proline 66, and threonine 96. Lysine 171 is an active-site residue. Lysine 246 lines the NAD(+) pocket.

The protein belongs to the HIBADH-related family. Homotetramer, dimer of dimers.

The enzyme catalyses L-serine + NAD(+) = aminoacetaldehyde + CO2 + NADH. It functions in the pathway amino-acid degradation. In terms of biological role, NAD-dependent L-serine dehydrogenase that catalyzes the oxidation of L-serine and methyl-L-serine and is possibly involved in serine catabolism. Has low activity toward beta-hydroxyisobutyrate. The polypeptide is NAD-dependent L-serine dehydrogenase (Pseudomonas aeruginosa (strain ATCC 15692 / DSM 22644 / CIP 104116 / JCM 14847 / LMG 12228 / 1C / PRS 101 / PAO1)).